Consider the following 751-residue polypeptide: FAD-dependent monooxygenase atnA (751 aa).

A helical transmembrane segment spans residues 8–28 (LIVGGGVAGLSLAIMLEAYGF). FAD-binding residues include E34, G48, and R109. Y218 is a catalytic residue. The FAD site is built by D311 and A324. Transmembrane regions (helical) follow at residues 446 to 466 (PLATISWIVFLTLAACFPWSV), 481 to 501 (SEVFQLYTSVMAVSISGLWVI), 508 to 528 (LLISPMFSSLPWILASNYWGW), 563 to 583 (ALLPCLAMAYSIPGILTALAS), 590 to 610 (DWWPVAHCTFPVLVYVSSTFL), 639 to 659 (IAVVSSAVHVTLIWNHGAALL), 663 to 683 (IISLLSVPLARTLASLTALIV), and 706 to 726 (AWAVILVSTVLLGPAASLAGA).

Belongs to the paxM FAD-dependent monooxygenase family. Requires FAD as cofactor.

It localises to the membrane. The protein operates within secondary metabolite biosynthesis; terpenoid biosynthesis. FAD-dependent monooxygenase; part of the gene cluster that mediates the biosynthesis of the meroterpenoids arthripenoids. The pathway begins with the HR-PKS atnH that catalyzes two chain-extension steps to form a reduced triketide, which then primes the SAT domain in the NR-PKS atnG to initiate three more cycles of extension to give a linear hexaketide corresponding to the polyketide part of arthripenoids. The FAD-dependent monooxygenase atnJ then performs an oxidative decarboxylation at C11 of the atnH/atnG product, via an electrophilic aromatic hydroxylation with concomitant ipso-decarboxylation. The membrane-bound polyprenyl transferase atnF then introduces a farnesyl group before the FAD-dependent monooxygenase atnK functions as the first epoxidase on terminal C12'-C13' olefin, followed by a second epoxidation on C7'-C8' catalyzed by atnA. The terpene cyclase/mutase atnI then initiates the sequential tricyclic ring formation through protonation of the terminal epoxide and catalyzes the regioselective and stereoselective 6/6/6-tricyclic ring formation. The cytochrome P450 monooxygenase atnM is responsible for hydroxylating both C1' and C10'. The next steps may involve ketoreduction and acetyl transfer by the ketoreductase atnB and the acetyltransferase atnC, and lead to the production of arthripenoid B, the final biosynthetic product of the atn cluster. The hydroquinone moiety in arthripenoid B is prone to undergo spontaneous oxidation to afford a benzoquinone compound, a key intermediate for generating structure diversity. For instance, addition of a cysteine followed by ring contraction gives arthripenoid A, tautomerization gives the main product arthripenoid C, addition of a molecular of water or amine affords arthripenoid D or E, respectively, and loss of one water forms arthripenoid F. This chain is FAD-dependent monooxygenase atnA, found in Arthrinium sp.